Here is a 123-residue protein sequence, read N- to C-terminus: Phosphoribosyl-AMP cyclohydrolase (123 aa).

A Mg(2+)-binding site is contributed by Asp73. Cys74 serves as a coordination point for Zn(2+). Mg(2+)-binding residues include Asp75 and Asp77. The Zn(2+) site is built by Cys90 and Cys97.

Belongs to the PRA-CH family. Homodimer. Mg(2+) serves as cofactor. Requires Zn(2+) as cofactor.

Its subcellular location is the cytoplasm. The catalysed reaction is 1-(5-phospho-beta-D-ribosyl)-5'-AMP + H2O = 1-(5-phospho-beta-D-ribosyl)-5-[(5-phospho-beta-D-ribosylamino)methylideneamino]imidazole-4-carboxamide. It functions in the pathway amino-acid biosynthesis; L-histidine biosynthesis; L-histidine from 5-phospho-alpha-D-ribose 1-diphosphate: step 3/9. Its function is as follows. Catalyzes the hydrolysis of the adenine ring of phosphoribosyl-AMP. The sequence is that of Phosphoribosyl-AMP cyclohydrolase from Methanoregula boonei (strain DSM 21154 / JCM 14090 / 6A8).